The primary structure comprises 704 residues: Polyribonucleotide nucleotidyltransferase (704 aa).

Residues Asp-487 and Asp-493 each contribute to the Mg(2+) site. A KH domain is found at 554 to 613 (PRLLTIKIHPDKIREVIGKGGSTIQAITKETGTQIDIQDDGTIIIASVNAIAAQAAKSRI). Residues 623-691 (GRIYEGKVAK…KQGRIRLSIK (69 aa)) enclose the S1 motif domain.

Belongs to the polyribonucleotide nucleotidyltransferase family. Component of the RNA degradosome, which is a multiprotein complex involved in RNA processing and mRNA degradation. The cofactor is Mg(2+).

It localises to the cytoplasm. It catalyses the reaction RNA(n+1) + phosphate = RNA(n) + a ribonucleoside 5'-diphosphate. In terms of biological role, involved in mRNA degradation. Catalyzes the phosphorolysis of single-stranded polyribonucleotides processively in the 3'- to 5'-direction. This is Polyribonucleotide nucleotidyltransferase from Xanthomonas euvesicatoria pv. vesicatoria (strain 85-10) (Xanthomonas campestris pv. vesicatoria).